The sequence spans 323 residues: Tyrosine recombinase XerD (323 aa).

One can recognise a Core-binding (CB) domain in the interval 21–106 (AEDDQAIQRF…TLRGFYALCL (86 aa)). The region spanning 127 to 317 (SLPKALTESQ…ARQHLQTLHA (191 aa)) is the Tyr recombinase domain. Residues arginine 167, lysine 191, histidine 269, arginine 272, and histidine 295 contribute to the active site. Residue tyrosine 304 is the O-(3'-phospho-DNA)-tyrosine intermediate of the active site.

Belongs to the 'phage' integrase family. XerD subfamily. Forms a cyclic heterotetrameric complex composed of two molecules of XerC and two molecules of XerD.

The protein localises to the cytoplasm. Its function is as follows. Site-specific tyrosine recombinase, which acts by catalyzing the cutting and rejoining of the recombining DNA molecules. The XerC-XerD complex is essential to convert dimers of the bacterial chromosome into monomers to permit their segregation at cell division. It also contributes to the segregational stability of plasmids. The chain is Tyrosine recombinase XerD from Xanthomonas campestris pv. campestris (strain ATCC 33913 / DSM 3586 / NCPPB 528 / LMG 568 / P 25).